A 380-amino-acid chain; its full sequence is Heme A synthase (380 aa).

The next 8 membrane-spanning stretches (helical) occupy residues 36–56, 125–145, 151–171, 187–207, 227–247, 287–307, 320–340, and 344–364; these read IRAWLAVLFALVVAMIVVGGL, VIGLVWALGFFGFLLARKIPA, LILPGVLGGVQGAVGAWMVAS, LATHLGLAFVILGLLAWSILQ, FGLATGWLHLAFLQILIGALV, LVQFIHRIVGYLLLAYGVMVW, FAFNAGFAALSLQVVLGIVTV, and APWQIAILHQLLAVGVFVLIL. H292 is a binding site for heme. Residue H352 participates in heme binding.

This sequence belongs to the COX15/CtaA family. Type 2 subfamily. In terms of assembly, interacts with CtaB. Heme b serves as cofactor.

Its subcellular location is the cell membrane. It carries out the reaction Fe(II)-heme o + 2 A + H2O = Fe(II)-heme a + 2 AH2. The protein operates within porphyrin-containing compound metabolism; heme A biosynthesis; heme A from heme O: step 1/1. Functionally, catalyzes the conversion of heme O to heme A by two successive hydroxylations of the methyl group at C8. The first hydroxylation forms heme I, the second hydroxylation results in an unstable dihydroxymethyl group, which spontaneously dehydrates, resulting in the formyl group of heme A. This chain is Heme A synthase, found in Ruegeria pomeroyi (strain ATCC 700808 / DSM 15171 / DSS-3) (Silicibacter pomeroyi).